The sequence spans 706 residues: Choline transporter-like protein 2 (706 aa).

Residues 1–33 lie on the Cytoplasmic side of the membrane; that stretch reads MGKEQQLYYGKHGTPQKYDPAFRGPIYNRGCTD. Position 14 is a phosphothreonine (Thr14). A helical membrane pass occupies residues 34 to 54; that stretch reads IICCVFLFLAIVGYVAVGIIA. The Extracellular segment spans residues 55-232; it reads WTHGDPRKVI…RIFEDYTVSW (178 aa). Asn187 and Asn200 each carry an N-linked (GlcNAc...) asparagine glycan. Residues 233–253 form a helical membrane-spanning segment; that stretch reads YWIIIGLIIAMVLSLLFIILL. Residues 254–256 lie on the Cytoplasmic side of the membrane; the sequence is RFL. The helical transmembrane segment at 257 to 277 threads the bilayer; the sequence is AGIMVWVMIVMVILVLGYGIL. Over 278–315 the chain is Extracellular; sequence HCYMEYARLRGEAGSDVSLVDLGFQTDFRVYLHLRQTW. Residues 316–336 traverse the membrane as a helical segment; sequence VAFMIILSIVEVIIILLLIFL. At 337–364 the chain is on the cytoplasmic side; the sequence is RKRILIAIALIKEASRAVGYVMCSLLYP. The chain crosses the membrane as a helical span at residues 365–385; sequence LVTFFLLCLCIAYWASTAIFL. The Extracellular portion of the chain corresponds to 386–457; the sequence is STSNEAVYKI…FNVFMFFWLA (72 aa). Residues Asn397 and Asn417 are each glycosylated (N-linked (GlcNAc...) asparagine). A helical membrane pass occupies residues 458-480; sequence NFVLALGQVTLAGAFASYYWAMN. The Cytoplasmic portion of the chain corresponds to 481–504; sequence KPDDLPAFPLFSAFGRALRYHTGS. The chain crosses the membrane as a helical span at residues 505-525; that stretch reads LAFGSLLLAIVQVIRVILEYL. Residues 526–563 lie on the Extracellular side of the membrane; sequence DQRLKAAENKFAKFLMSCLKCCFWCLEKFIKFLNRNAY. Residues 564–584 traverse the membrane as a helical segment; the sequence is IMIAIYGTNFCTSARNAFFLL. The Cytoplasmic segment spans residues 585-599; it reads MRNIIRVAVLDKVTD. Residues 600–620 form a helical membrane-spanning segment; the sequence is FLFLLGKLLIVGSVGILAFFF. The Extracellular portion of the chain corresponds to 621–638; it reads FTHRIRIVQDTAPSLNYY. Residues 639 to 659 form a helical membrane-spanning segment; sequence WVPVVTVVIGSYLIAHGFFSV. Over 660–706 the chain is Cytoplasmic; it reads YGMCVDTLFLCFLEDLERNDGTPERPYFMSLTLKKILNKTNKRQAEA.

It belongs to the CTL (choline transporter-like) family. In terms of assembly, interacts with COCH. N-glycosylated.

Its subcellular location is the cell membrane. It is found in the mitochondrion outer membrane. It catalyses the reaction choline(out) + n H(+)(in) = choline(in) + n H(+)(out). The catalysed reaction is ethanolamine(out) + n H(+)(in) = ethanolamine(in) + n H(+)(out). Functionally, choline/H+ antiporter, mainly in mitochodria. Also acts as a low-affinity ethanolamine/H+ antiporter, regulating the supply of extracellular ethanolamine (Etn) for the CDP-Etn pathway, redistribute intracellular Etn and balance the CDP-Cho and CDP-Etn arms of the Kennedy pathway. In Bos taurus (Bovine), this protein is Choline transporter-like protein 2 (SLC44A2).